The sequence spans 275 residues: Dermonecrotic toxin SpaSicTox-betaIIA3 (275 aa).

His-5 is an active-site residue. Residues Glu-25 and Asp-27 each contribute to the Mg(2+) site. Residue His-41 is the Nucleophile of the active site. 2 disulfide bridges follow: Cys-45-Cys-51 and Cys-47-Cys-190. Asp-85 is a binding site for Mg(2+).

This sequence belongs to the arthropod phospholipase D family. Class II subfamily. Mg(2+) is required as a cofactor. In terms of tissue distribution, expressed by the venom gland.

It is found in the secreted. The catalysed reaction is an N-(acyl)-sphingosylphosphocholine = an N-(acyl)-sphingosyl-1,3-cyclic phosphate + choline. It catalyses the reaction an N-(acyl)-sphingosylphosphoethanolamine = an N-(acyl)-sphingosyl-1,3-cyclic phosphate + ethanolamine. The enzyme catalyses a 1-acyl-sn-glycero-3-phosphocholine = a 1-acyl-sn-glycero-2,3-cyclic phosphate + choline. It carries out the reaction a 1-acyl-sn-glycero-3-phosphoethanolamine = a 1-acyl-sn-glycero-2,3-cyclic phosphate + ethanolamine. In terms of biological role, dermonecrotic toxins cleave the phosphodiester linkage between the phosphate and headgroup of certain phospholipids (sphingolipid and lysolipid substrates), forming an alcohol (often choline) and a cyclic phosphate. This toxin acts on sphingomyelin (SM). It may also act on ceramide phosphoethanolamine (CPE), lysophosphatidylcholine (LPC) and lysophosphatidylethanolamine (LPE), but not on lysophosphatidylserine (LPS), and lysophosphatidylglycerol (LPG). It acts by transphosphatidylation, releasing exclusively cyclic phosphate products as second products. Induces dermonecrosis, hemolysis, increased vascular permeability, edema, inflammatory response, and platelet aggregation. The protein is Dermonecrotic toxin SpaSicTox-betaIIA3 of Sicarius patagonicus (Six-eyed sand spider).